The sequence spans 271 residues: Transmembrane protein 33 homolog (271 aa).

A disordered region spans residues 1 to 32; sequence MVEIVEEPDDHQSSSTGAGSSGSSSAPPPPPP. Positions 13-25 are enriched in low complexity; the sequence is SSSTGAGSSGSSS. The next 3 membrane-spanning stretches (helical) occupy residues 56–76, 125–145, and 180–200; these read VLTVFFALNYMIPFIGLVPAH, VVFLMAAPVSMAALPVTIYAA, and ALGIIACSEIFLVPLLVSLIF.

This sequence belongs to the PER33/POM33 family.

The protein localises to the membrane. This chain is Transmembrane protein 33 homolog, found in Caenorhabditis elegans.